A 587-amino-acid chain; its full sequence is Methylcrotonoyl-CoA carboxylase beta chain, mitochondrial (587 aa).

The transit peptide at 1 to 26 directs the protein to the mitochondrion; sequence MLRILGRRVVSASKELTSIQQWRIRP. The CoA carboxyltransferase N-terminal domain occupies 68 to 324; sequence MEGILSELRS…AAKQGMEGTF (257 aa). Residues 68 to 579 are carboxyltransferase; the sequence is MEGILSELRS…SAALNRPLED (512 aa). The region spanning 333-579 is the CoA carboxyltransferase C-terminal domain; that stretch reads EPLYDINELR…SAALNRPLED (247 aa). The interval 367–396 is acyl-CoA binding; sequence EFDEFKKQYGTTLVTGFARIYGQTVGIIGN.

It belongs to the AccD/PCCB family. In terms of assembly, probably a heterodimer composed of biotin-containing alpha subunits and beta subunits. In terms of tissue distribution, in roots, cotyledons, leaves, flowers, ovaries, siliques and embryos.

The protein localises to the mitochondrion matrix. It carries out the reaction 3-methylbut-2-enoyl-CoA + hydrogencarbonate + ATP = 3-methyl-(2E)-glutaconyl-CoA + ADP + phosphate + H(+). It participates in amino-acid degradation; L-leucine degradation; (S)-3-hydroxy-3-methylglutaryl-CoA from 3-isovaleryl-CoA: step 2/3. Functionally, carboxyltransferase subunit of the 3-methylcrotonyl-CoA carboxylase, an enzyme that catalyzes the conversion of 3-methylcrotonyl-CoA to 3-methylglutaconyl-CoA, a critical step for leucine and isovaleric acid catabolism. The polypeptide is Methylcrotonoyl-CoA carboxylase beta chain, mitochondrial (MCCB) (Arabidopsis thaliana (Mouse-ear cress)).